Here is a 495-residue protein sequence, read N- to C-terminus: Pre-glycoprotein polyprotein GP complex (495 aa).

Residue Gly2 is the site of N-myristoyl glycine; by host attachment. Over 2 to 17 (GQFISFMQEIPIFLQE) the chain is Extracellular. The helical transmembrane segment at 18–33 (ALNIALVAVSLICIVK) threads the bilayer. Topologically, residues 34–58 (GLVNLYRCGLFQLMVFLVLAGRSCS) are cytoplasmic. Cys57 is a Zn(2+) binding site. Residues 59–434 (EETFKIGMHT…QGRTPITLVD (376 aa)) are Extracellular-facing. Disulfide bonds link Cys92/Cys236, Cys281/Cys294, Cys303/Cys312, and Cys366/Cys387. N-linked (GlcNAc...) asparagine; by host glycans are attached at residues Asn95 and Asn188. 4 N-linked (GlcNAc...) asparagine; by host glycosylation sites follow: Asn367, Asn375, Asn392, and Asn397. Residues 435-455 (ICFWSTVFFTSTLFLHLIGFP) traverse the membrane as a helical segment. At 456–495 (THEHIRGEGCPLPHRLNSMGGCRCGKYLPLKKPTIWHRRH) the chain is on the cytoplasmic side. 7 residues coordinate Zn(2+): His457, His459, Cys465, His469, Cys477, Cys479, and His495.

It belongs to the arenaviridae GPC protein family. Interacts with glycoprotein G2. Part of the GP complex (GP-C) together with glycoprotein G1 and glycoprotein G2. The GP-complex interacts with protein Z, which interacts with ribonucleocapsid; these interactions may induce virion budding. In terms of assembly, homotrimer; disulfide-linked. In pre-fusion state, G1 homotrimers bind G2 homotrimers via ionic interactions. Part of the GP complex (GP-C) together with glycoprotein G2 and the stable signal peptide. The GP-complex interacts with protein Z, which interacts with ribonucleocapsid; these interactions may induce virion budding. As to quaternary structure, homotrimer. Interacts with the stable signal peptide. In pre-fusion state, G2 homotrimers bind G1 homotrimers via ionic interactions. Part of the GP complex (GP-C) together with glycoprotein G1 and the stable signal peptide. Acidification in the endosome triggers rearrangements, which ultimately leads to a 6 helix bundle formed by the two heptad repeat domains (HR1 and HR2) in post-fusion state. The GP-complex interacts with protein Z, which interacts with ribonucleocapsid; these interactions may induce virion budding. Post-translationally, specific enzymatic cleavages in vivo yield mature proteins. GP-C polyprotein is cleaved in the endoplasmic reticulum by the host protease MBTPS1. Only cleaved glycoprotein is incorporated into virions. In terms of processing, the SSP remains stably associated with the GP complex following cleavage by signal peptidase and plays crucial roles in the trafficking of GP through the secretory pathway. Myristoylation is necessary for GP2-mediated fusion activity.

The protein resides in the virion membrane. It localises to the host endoplasmic reticulum membrane. The protein localises to the host Golgi apparatus membrane. Its subcellular location is the host cell membrane. Functions as a cleaved signal peptide that is retained as the third component of the GP complex (GP-C). Helps to stabilize the spike complex in its native conformation. The SSP is required for efficient glycoprotein expression, post-translational maturation cleavage of G1 and G2, glycoprotein transport to the cell surface plasma membrane, formation of infectious virus particles, and acid pH-dependent glycoprotein-mediated cell fusion. Functionally, forms the virion spikes together with glycoprotein G2. The glycoprotein spike trimers are connected to the underlying matrix. Interacts with the host receptor leading to virus endocytosis. Its function is as follows. Forms the virion spikes together with glycoprotein G1. The glycoprotein spike trimers are connected to the underlying matrix. Class I viral fusion protein that directs fusion of viral and host endosomal membranes, leading to delivery of the nucleocapsid into the cytoplasm. Membrane fusion is mediated by irreversible conformational changes induced by acidification. The protein is Pre-glycoprotein polyprotein GP complex of Tacaribe virus (strain Franze-Fernandez) (TCRV).